The sequence spans 647 residues: UvrABC system protein C (647 aa).

The GIY-YIG domain maps to 26–106; sequence SEPGCYLMRD…IKEHQPYFNI (81 aa). Positions 216-251 constitute a UVR domain; it reads DQLKDLLHKQMLIQSKLQEFEKAAIIRDQIKGIEQL.

The protein belongs to the UvrC family. As to quaternary structure, interacts with UvrB in an incision complex.

It localises to the cytoplasm. The UvrABC repair system catalyzes the recognition and processing of DNA lesions. UvrC both incises the 5' and 3' sides of the lesion. The N-terminal half is responsible for the 3' incision and the C-terminal half is responsible for the 5' incision. This Prochlorococcus marinus (strain MIT 9211) protein is UvrABC system protein C.